Consider the following 228-residue polypeptide: Small ribosomal subunit protein uS3 (228 aa).

The KH type-2 domain maps to 39–107; it reads VREYLQDKLK…PVHINIEEIR (69 aa).

The protein belongs to the universal ribosomal protein uS3 family. As to quaternary structure, part of the 30S ribosomal subunit. Forms a tight complex with proteins S10 and S14.

In terms of biological role, binds the lower part of the 30S subunit head. Binds mRNA in the 70S ribosome, positioning it for translation. This Pseudomonas aeruginosa (strain UCBPP-PA14) protein is Small ribosomal subunit protein uS3.